The following is a 119-amino-acid chain: Large ribosomal subunit protein bL20 (119 aa).

The protein belongs to the bacterial ribosomal protein bL20 family.

Binds directly to 23S ribosomal RNA and is necessary for the in vitro assembly process of the 50S ribosomal subunit. It is not involved in the protein synthesizing functions of that subunit. The protein is Large ribosomal subunit protein bL20 of Buchnera aphidicola subsp. Cinara cedri (strain Cc).